We begin with the raw amino-acid sequence, 182 residues long: Adenylate kinase (182 aa).

12 to 17 (GAGKGT) is an ATP binding site. The tract at residues 32–61 (STGDLLRAEVGAKTPLGQEAAAVMNRGELV) is NMP. Residues Thr-33, Arg-38, 59–61 (ELV), 85–88 (GFPR), and Gln-92 each bind AMP. Residues 126-132 (SRGRSDD) form an LID region. Residue Arg-127 coordinates ATP. Arg-129 and Arg-140 together coordinate AMP. Gly-168 lines the ATP pocket.

It belongs to the adenylate kinase family. Monomer.

The protein resides in the cytoplasm. It catalyses the reaction AMP + ATP = 2 ADP. Its pathway is purine metabolism; AMP biosynthesis via salvage pathway; AMP from ADP: step 1/1. Functionally, catalyzes the reversible transfer of the terminal phosphate group between ATP and AMP. Plays an important role in cellular energy homeostasis and in adenine nucleotide metabolism. This is Adenylate kinase from Prochlorococcus marinus (strain MIT 9303).